The following is a 1072-amino-acid chain: MLLDENKGTSTIPEFGKIQFEGFCRFIDQGLIEELQNFPKIEDTDQEIESQLFGNKYELAEPLIKERNAVYQSLTYSSELYVPARLIQRNSRKIQKQTVLIGNLPLMNSQGTFVVNGISRIVVNQILRSPGIYYSSEPDQSGITLYTSTIISDWGGRSKLEIDGKTRIWARVSKKRKISIPILLSAMGSNLGEILDNVCYPKIFLSLLTERQEQKEYLRSKKNAILEFYKKLYCVSGDLVFSESLCKELRKKFLQQRCELGKIGRRNPNQKLNLDIPENEIFSLPQDVLAAVDYSIRVKFGMGTLDDMDHLKNRRIRSVADLLQNQFGLALGRLENAVRRTIRRATKRKCLPTPNNLVTSTPLTTTFQDFFGSHPLSQFLDQTNPLTEIVHRRKLSYLGPGGLTGRTASSRIRDIHPSHYGRICPIETSEGMNAGLVASLAIRARIGHCGSLQSPFHKISERSEEEHMVYLSSGEDEYYRIATGNYLALNQGIREEQVTPARYRQEFLAIAWEQIHFRSIFPFQYFSVGVSLIPFLEHNDANRALMGSNMQRQAVPLFQPEKCIVGTGLEGQAAPDSGSAAIATQGGRITYIDAGKITSSVDGDTVGTELVTYQRSNNNTCMHQKPRVRRGEYVKKGQILADGAATVGGELSLGKNILVAHMPWEGYNFEDAILISERLVYEDIYTSFHIERYGIVTCMTSQGPERITKEIPHLDAHLLRHLDGNGLVMLGSWVETGDVLVGKLTPQPAEESLRAPEGRLLQAIFGIQVSSARESCLRVPIGGRGRVIDVRWIHKEENFGDNAEVVHVYIFQKRKIQVGDKVAGRLGNKGIISKILPRQDMPYLQDGTSVDMVLNPLGVLSRMNVGQIFECLPGLAGNLMNRHYRITPFDERYEREASRKPVFPELYGASEQTANPWVFEPNHPGKNRLIDGRTGDTLEQPVTTGKAYMPKLIHQVDDKIHARSSGPYALVTQQPLRGKSKRGGQRVGEMEVWALEGFGVAYILQEMLTLKSDHIGARHEVLGAIITGGPIPRPGTAPESFRLLVRELRSLAPELDHAIIYENDFQIDRKEV.

The protein belongs to the RNA polymerase beta chain family. In terms of assembly, in plastids the minimal PEP RNA polymerase catalytic core is composed of four subunits: alpha, beta, beta', and beta''. When a (nuclear-encoded) sigma factor is associated with the core the holoenzyme is formed, which can initiate transcription.

Its subcellular location is the plastid. The protein localises to the chloroplast. The enzyme catalyses RNA(n) + a ribonucleoside 5'-triphosphate = RNA(n+1) + diphosphate. In terms of biological role, DNA-dependent RNA polymerase catalyzes the transcription of DNA into RNA using the four ribonucleoside triphosphates as substrates. The sequence is that of DNA-directed RNA polymerase subunit beta from Cycas taitungensis (Prince sago).